The sequence spans 247 residues: Cementoblastoma-derived protein 1 (247 aa).

The span at 1 to 28 shows a compositional bias: polar residues; that stretch reads MGTSSTDSQQAGHRRCSTSNTSAENLTC. Disordered stretches follow at residues 1 to 52 and 147 to 183; these read MGTS…AGQP and EENS…EKVK.

Phosphorylated. In terms of processing, N-glycosylated. Expressed by cementoblasts, a subpopulation of periodontal ligament cells and cells located around vessels in periodontium (at protein level).

The protein localises to the cytoplasm. It is found in the nucleus. Its function is as follows. May play a role in development of the periodontium which surrounds and supports the teeth by promoting the differentiation of multi-potent cells from the periodontal ligament into cementoblasts to form the cementum. Binds hydroxyapatite and may promote the biomineralization of the cementum. Also promotes cell proliferation. This chain is Cementoblastoma-derived protein 1, found in Homo sapiens (Human).